The primary structure comprises 171 residues: Co-chaperone protein HscB homolog (171 aa).

One can recognise a J domain in the interval 2–74 (NYFELFGLPI…LRRAEYLLSL (73 aa)).

The protein belongs to the HscB family. Interacts with HscA and stimulates its ATPase activity.

Co-chaperone involved in the maturation of iron-sulfur cluster-containing proteins. Seems to help targeting proteins to be folded toward HscA. This chain is Co-chaperone protein HscB homolog, found in Vibrio cholerae serotype O1 (strain M66-2).